A 500-amino-acid chain; its full sequence is L-arabinose isomerase (500 aa).

Glutamate 306, glutamate 333, histidine 350, and histidine 450 together coordinate Mn(2+).

The protein belongs to the arabinose isomerase family. As to quaternary structure, homohexamer. Requires Mn(2+) as cofactor.

It carries out the reaction beta-L-arabinopyranose = L-ribulose. It functions in the pathway carbohydrate degradation; L-arabinose degradation via L-ribulose; D-xylulose 5-phosphate from L-arabinose (bacterial route): step 1/3. In terms of biological role, catalyzes the conversion of L-arabinose to L-ribulose. In Yersinia pestis bv. Antiqua (strain Nepal516), this protein is L-arabinose isomerase.